The sequence spans 178 residues: Large ribosomal subunit protein uL6 (178 aa).

This sequence belongs to the universal ribosomal protein uL6 family. In terms of assembly, part of the 50S ribosomal subunit.

This protein binds to the 23S rRNA, and is important in its secondary structure. It is located near the subunit interface in the base of the L7/L12 stalk, and near the tRNA binding site of the peptidyltransferase center. In Limosilactobacillus reuteri (strain DSM 20016) (Lactobacillus reuteri), this protein is Large ribosomal subunit protein uL6.